Here is a 133-residue protein sequence, read N- to C-terminus: Large ribosomal subunit protein bL19 (133 aa).

It belongs to the bacterial ribosomal protein bL19 family.

Functionally, this protein is located at the 30S-50S ribosomal subunit interface and may play a role in the structure and function of the aminoacyl-tRNA binding site. This is Large ribosomal subunit protein bL19 from Sulfurihydrogenibium sp. (strain YO3AOP1).